A 538-amino-acid polypeptide reads, in one-letter code: Bifunctional purine biosynthesis protein PurH (538 aa).

An MGS-like domain is found at proline 11–threonine 158.

Belongs to the PurH family.

It catalyses the reaction (6R)-10-formyltetrahydrofolate + 5-amino-1-(5-phospho-beta-D-ribosyl)imidazole-4-carboxamide = 5-formamido-1-(5-phospho-D-ribosyl)imidazole-4-carboxamide + (6S)-5,6,7,8-tetrahydrofolate. The enzyme catalyses IMP + H2O = 5-formamido-1-(5-phospho-D-ribosyl)imidazole-4-carboxamide. It participates in purine metabolism; IMP biosynthesis via de novo pathway; 5-formamido-1-(5-phospho-D-ribosyl)imidazole-4-carboxamide from 5-amino-1-(5-phospho-D-ribosyl)imidazole-4-carboxamide (10-formyl THF route): step 1/1. The protein operates within purine metabolism; IMP biosynthesis via de novo pathway; IMP from 5-formamido-1-(5-phospho-D-ribosyl)imidazole-4-carboxamide: step 1/1. The protein is Bifunctional purine biosynthesis protein PurH of Bartonella bacilliformis (strain ATCC 35685 / KC583 / Herrer 020/F12,63).